Reading from the N-terminus, the 287-residue chain is S-methyl-5'-thioadenosine phosphorylase (287 aa).

Phosphate-binding positions include Thr13 and 55 to 56 (RH). Residue Met186 participates in substrate binding. Thr187 is a binding site for phosphate. 210 to 212 (DYD) is a binding site for substrate.

Belongs to the PNP/MTAP phosphorylase family. MTAP subfamily. Homohexamer. Dimer of a homotrimer.

It catalyses the reaction S-methyl-5'-thioadenosine + phosphate = 5-(methylsulfanyl)-alpha-D-ribose 1-phosphate + adenine. Its pathway is amino-acid biosynthesis; L-methionine biosynthesis via salvage pathway; S-methyl-5-thio-alpha-D-ribose 1-phosphate from S-methyl-5'-thioadenosine (phosphorylase route): step 1/1. Its function is as follows. Catalyzes the reversible phosphorylation of S-methyl-5'-thioadenosine (MTA) to adenine and 5-methylthioribose-1-phosphate. Involved in the breakdown of MTA, a major by-product of polyamine biosynthesis. Responsible for the first step in the methionine salvage pathway after MTA has been generated from S-adenosylmethionine. Has broad substrate specificity with 6-aminopurine nucleosides as preferred substrates. This Leptospira interrogans serogroup Icterohaemorrhagiae serovar Lai (strain 56601) protein is S-methyl-5'-thioadenosine phosphorylase.